The sequence spans 380 residues: UDP-N-acetylglucosamine 2-epimerase (380 aa).

It belongs to the UDP-N-acetylglucosamine 2-epimerase family.

The protein localises to the cytoplasm. It carries out the reaction UDP-N-acetyl-alpha-D-glucosamine = UDP-N-acetyl-alpha-D-mannosamine. It participates in cell wall biogenesis; poly(glycerol phosphate) teichoic acid biosynthesis. Functionally, catalyzes the conversion of UDP-N-acetylglucosamine into UDP-N-acetylmannosamine, a precursor of the teichoic acid linkage unit. This Bacillus subtilis (strain 168) protein is UDP-N-acetylglucosamine 2-epimerase (mnaA).